A 556-amino-acid chain; its full sequence is ATP synthase subunit alpha 2 (556 aa).

177 to 184 is an ATP binding site; the sequence is GDRATGKT. Positions 514 to 556 are disordered; the sequence is GGHAEDAADDMGGALDGEHASGDATSIAPTPPGGAEAGAPRKR. Positions 546 to 556 are enriched in low complexity; sequence GGAEAGAPRKR.

Belongs to the ATPase alpha/beta chains family. F-type ATPases have 2 components, CF(1) - the catalytic core - and CF(0) - the membrane proton channel. CF(1) has five subunits: alpha(3), beta(3), gamma(1), delta(1), epsilon(1). CF(0) has three main subunits: a(1), b(2) and c(9-12). The alpha and beta chains form an alternating ring which encloses part of the gamma chain. CF(1) is attached to CF(0) by a central stalk formed by the gamma and epsilon chains, while a peripheral stalk is formed by the delta and b chains.

The protein localises to the cell inner membrane. The catalysed reaction is ATP + H2O + 4 H(+)(in) = ADP + phosphate + 5 H(+)(out). Its function is as follows. Produces ATP from ADP in the presence of a proton gradient across the membrane. The alpha chain is a regulatory subunit. The chain is ATP synthase subunit alpha 2 from Burkholderia thailandensis (strain ATCC 700388 / DSM 13276 / CCUG 48851 / CIP 106301 / E264).